The primary structure comprises 154 residues: SsrA-binding protein (154 aa).

Belongs to the SmpB family.

Its subcellular location is the cytoplasm. Functionally, required for rescue of stalled ribosomes mediated by trans-translation. Binds to transfer-messenger RNA (tmRNA), required for stable association of tmRNA with ribosomes. tmRNA and SmpB together mimic tRNA shape, replacing the anticodon stem-loop with SmpB. tmRNA is encoded by the ssrA gene; the 2 termini fold to resemble tRNA(Ala) and it encodes a 'tag peptide', a short internal open reading frame. During trans-translation Ala-aminoacylated tmRNA acts like a tRNA, entering the A-site of stalled ribosomes, displacing the stalled mRNA. The ribosome then switches to translate the ORF on the tmRNA; the nascent peptide is terminated with the 'tag peptide' encoded by the tmRNA and targeted for degradation. The ribosome is freed to recommence translation, which seems to be the essential function of trans-translation. The chain is SsrA-binding protein from Treponema pallidum (strain Nichols).